A 516-amino-acid chain; its full sequence is DNA topoisomerase large subunit (516 aa).

Residue 128-136 coordinates ATP; the sequence is VTGGMNGVG. Residues 369–400 mediate DNA binding; it reads AALARKLAAEKAAETKAAKKASKAKVHKHIKA.

It belongs to the type II topoisomerase family. In terms of assembly, part of the DNA topoisomerase complex made of gp39, gp52 and gp60. The cofactor is Mg(2+).

The enzyme catalyses ATP-dependent breakage, passage and rejoining of double-stranded DNA.. In terms of biological role, large subunit of the DNA topoisomerase that untwists superhelical DNA. Controls of topological states of double-stranded DNA by transient breakage and subsequent rejoining of DNA strands. This chain is DNA topoisomerase large subunit (39), found in Escherichia coli (Bacteriophage T4).